The primary structure comprises 814 residues: Rho GTPase-activating protein 44 (814 aa).

Residues 14-249 enclose the BAR domain; that stretch reads QTVGRAEKTE…IKAQQEAWVE (236 aa). Residues 255-445 enclose the Rho-GAP domain; that stretch reads KPLEEHLMIS…PIIQHADWFF (191 aa). 3 disordered regions span residues 467–493, 531–768, and 784–814; these read ANYSSMPSPDMDPADRRQPEQARRPLS, SAGR…SMST, and STLRLSPLEHARRHSVTDKRDSEEESESTAL. The segment covering 479–489 has biased composition (basic and acidic residues); the sequence is PADRRQPEQAR. Ser493 carries the post-translational modification Phosphoserine. Composition is skewed to low complexity over residues 531 to 541, 567 to 581, 598 to 612, 622 to 637, 684 to 704, and 741 to 752; these read SAGRKAACAPP, SPATPAPALSPSGAS, SPGSGQKGSPGSIQG, PQPAASPSQLPADQSP, SPYGLSYPPGYSMASGQLSPA, and SVSLSASSPQST. The interval 727–814 is interaction with BST2; sequence KPRQRPTLPP…SEEESESTAL (88 aa). Over residues 790 to 805 the composition is skewed to basic and acidic residues; that stretch reads PLEHARRHSVTDKRDS. Ser805 is modified (phosphoserine). A PDZ-binding motif is present at residues 811–814; it reads STAL.

In terms of assembly, interacts with BST2 (via cytoplasmic domain). Interacts (probably via PDZ-binding motif) with SHANK3 (via PDZ domain); the interaction takes place in dendritic spines and promotes GRIA1 exocytosis. In terms of tissue distribution, expressed in brain, detected at high levels in hippocampal CA1 (at protein level).

The protein localises to the cell projection. It localises to the dendritic spine. Its subcellular location is the recycling endosome. The protein resides in the presynapse. It is found in the dendrite. In terms of biological role, GTPase-activating protein (GAP) that stimulates the GTPase activity of Rho-type GTPases. Thereby, controls Rho-type GTPases cycling between their active GTP-bound and inactive GDP-bound states. Acts as a GAP at least for CDC42 and RAC1. In neurons, is involved in dendritic spine formation and synaptic plasticity in a specific RAC1-GAP activity. Limits the initiation of exploratory dendritic filopodia. Recruited to actin-patches that seed filopodia, binds specifically to plasma membrane sections that are deformed inward by acto-myosin mediated contractile forces. Acts through GAP activity on RAC1 to reduce actin polymerization necessary for filopodia formation. In association with SHANK3, promotes GRIA1 exocytosis from recycling endosomes and spine morphological changes associated to long-term potentiation. The polypeptide is Rho GTPase-activating protein 44 (Rattus norvegicus (Rat)).